The following is a 212-amino-acid chain: Large ribosomal subunit protein uL1 (212 aa).

It belongs to the universal ribosomal protein uL1 family. Part of the 50S ribosomal subunit.

Its function is as follows. Binds directly to 23S rRNA. Probably involved in E site tRNA release. Protein L1 is also a translational repressor protein, it controls the translation of its operon by binding to its mRNA. This chain is Large ribosomal subunit protein uL1, found in Methanosphaera stadtmanae (strain ATCC 43021 / DSM 3091 / JCM 11832 / MCB-3).